A 255-amino-acid polypeptide reads, in one-letter code: MFAPSRRRVLEAVASSSSSPVVTLPGFLVPAFQQTAGAAARRNFSATTTRPSKLGRTPLSIPPGVEITIGEPFVKRDMTQWKQQPKRKITVQGPLGQLEMDIPDFIKIDHDAEARRATLSVANRDEKEQREMWGTTWAYLNRFIMGVSEGHTAVLRLVGIGYRATIDTRPEKEEYPGQQFVCLKLGFSHPVEMGVPKGMKASTPQPTRILLEGINREQVMTFAADIRRWRVPEPYKGKGIFVNGETIKLKQKKIK.

The tract at residues 39 to 61 (AARRNFSATTTRPSKLGRTPLSI) is disordered.

It belongs to the universal ribosomal protein uL6 family. Component of the mitochondrial large ribosomal subunit (mt-LSU). Mature N.crassa 74S mitochondrial ribosomes consist of a small (37S) and a large (54S) subunit. The 37S small subunit contains a 16S ribosomal RNA (16S mt-rRNA) and 32 different proteins. The 54S large subunit contains a 23S rRNA (23S mt-rRNA) and 42 different proteins.

The protein localises to the mitochondrion. Functionally, component of the mitochondrial ribosome (mitoribosome), a dedicated translation machinery responsible for the synthesis of mitochondrial genome-encoded proteins, including at least some of the essential transmembrane subunits of the mitochondrial respiratory chain. The mitoribosomes are attached to the mitochondrial inner membrane and translation products are cotranslationally integrated into the membrane. This Neurospora crassa (strain ATCC 24698 / 74-OR23-1A / CBS 708.71 / DSM 1257 / FGSC 987) protein is Large ribosomal subunit protein uL6m (mrpl6).